Here is a 382-residue protein sequence, read N- to C-terminus: Anhydro-N-acetylmuramic acid kinase (382 aa).

9–16 (GTSLDGID) serves as a coordination point for ATP.

Belongs to the anhydro-N-acetylmuramic acid kinase family.

It catalyses the reaction 1,6-anhydro-N-acetyl-beta-muramate + ATP + H2O = N-acetyl-D-muramate 6-phosphate + ADP + H(+). It participates in amino-sugar metabolism; 1,6-anhydro-N-acetylmuramate degradation. Its pathway is cell wall biogenesis; peptidoglycan recycling. In terms of biological role, catalyzes the specific phosphorylation of 1,6-anhydro-N-acetylmuramic acid (anhMurNAc) with the simultaneous cleavage of the 1,6-anhydro ring, generating MurNAc-6-P. Is required for the utilization of anhMurNAc either imported from the medium or derived from its own cell wall murein, and thus plays a role in cell wall recycling. In Bacillus cereus (strain 03BB102), this protein is Anhydro-N-acetylmuramic acid kinase.